The following is a 1487-amino-acid chain: Adhesion G protein-coupled receptor L2 (1487 aa).

The signal sequence occupies residues 1-25 (MVSSGCRMRSLWFIIIISFSPSTEG). The Extracellular portion of the chain corresponds to 26-855 (FSRAALPFGL…VHHLLLTVIT (830 aa)). The region spanning 41-130 (SCEGYSIDLR…KYLEVQYECV (90 aa)) is the SUEL-type lectin domain. N99 carries an N-linked (GlcNAc...) asparagine glycan. The Olfactomedin-like domain maps to 139–398 (VCPGTLKAIV…ILRYSLEFGP (260 aa)). Residues 423-439 (STTSSASQRGPVSSTAA) show a composition bias toward polar residues. The interval 423-461 (STTSSASQRGPVSSTAAGPQDGSRGTKPPPAVSTTKIPP) is disordered. N-linked (GlcNAc...) asparagine glycosylation is found at N524 and N735. A GAIN-B domain is found at 663-841 (TRVSMPTENI…AILMAHREIA (179 aa)). Disulfide bonds link C792-C823 and C811-C825. The tract at residues 792-841 (CSFWNYSERTMMGYWSTQGCKLVDTNKTRTTCACSHLTNFAILMAHREIA) is GPS. A stachel region spans residues 829-841 (TNFAILMAHREIA). A helical transmembrane segment spans residues 856-876 (WVGIVVSLVCLAICIFTFCFF). The Cytoplasmic segment spans residues 877–884 (RGLQSDRN). The chain crosses the membrane as a helical span at residues 885–905 (TIHKNLCINLFIAEFIFLIGI). At 906–911 (DKTKYT) the chain is on the extracellular side. The helical transmembrane segment at 912–932 (IACPVFAGLLHFFFLAAFSWM) threads the bilayer. Residues 933–955 (CLEGVQLYLMLVEVFESEYSRKK) lie on the Cytoplasmic side of the membrane. A helical transmembrane segment spans residues 956–976 (YYYVAGYLFPATVVGVSAAID). The Extracellular portion of the chain corresponds to 977-994 (YKSYGTVQACWLHVDNYF). Residues 995–1015 (IWSFIGPVTFIILLNIIFLVI) traverse the membrane as a helical segment. At 1016–1064 (TLCKMVKHSNTLKPDSSRLENINNYRVCDGYYNTDLPGYEDNKPFIKSW) the chain is on the cytoplasmic side. A helical membrane pass occupies residues 1065 to 1085 (VLGAFALLCLLGLTWSFGLLF). Residues 1086–1090 (VNEET) are Extracellular-facing. A helical transmembrane segment spans residues 1091-1111 (VVMAYLFTAFNAFQGLFIFIF). Positions 1386–1430 (EADDHLQSPNRDSLYTSMPNLRDSPYPESSPDMAEDLSPSRRSEN) are disordered. Polar residues predominate over residues 1392–1404 (QSPNRDSLYTSMP). Phosphoserine is present on residues S1402, S1437, and S1458.

It belongs to the G-protein coupled receptor 2 family. Adhesion G-protein coupled receptor (ADGR) subfamily. Heterodimer of 2 chains generated by proteolytic processing; the large extracellular N-terminal fragment and the membrane-bound C-terminal fragment predominantly remain associated and non-covalently linked. In terms of processing, autoproteolytically processed at the GPS region of the GAIN-B domain; this cleavage modulates receptor activity. In terms of tissue distribution, ubiquitously expressed. In neurons, specifically localizes to dendritic domains of CA1 pyramidal neurons in the S. lacunosummoleculare.

It is found in the postsynaptic cell membrane. Its activity is regulated as follows. Forms a heterodimer of 2 chains generated by proteolytic processing that remain associated through non-covalent interactions mediated by the GAIN-B domain. In the inactivated receptor, the Stachel sequence (also named stalk) is embedded in the GAIN-B domain, where it adopts a beta-strand conformation. On activation, the Stachel moves into the 7 transmembrane region and adopts a twisted hook-shaped configuration that forms contacts within the receptor, leading to coupling of a G-alpha protein, which activates signaling. The cleaved GAIN-B and N-terminal domains can then dissociate from the rest of the receptor. In terms of biological role, orphan adhesion G-protein coupled receptor (aGPCR), which mediates synapse specificity. Ligand binding causes a conformation change that triggers signaling via guanine nucleotide-binding proteins (G proteins) and modulates the activity of downstream effectors. Following G-protein coupled receptor activation, associates with cell adhesion molecules that are expressed at the surface of adjacent cells to direct synapse specificity. Specifically mediates the establishment of perforant-path synapses on CA1-region pyramidal neurons in the hippocampus. Localizes to postsynaptic spines in excitatory synapses in the S.lacunosum-moleculare and interacts with presynaptic cell adhesion molecules, such as teneurins, promoting synapse formation. This chain is Adhesion G protein-coupled receptor L2, found in Mus musculus (Mouse).